The chain runs to 452 residues: Probable phosphoglucosamine mutase (452 aa).

Ser96 serves as the catalytic Phosphoserine intermediate. Positions 96, 233, 235, and 237 each coordinate Mg(2+). Phosphoserine is present on Ser96.

Belongs to the phosphohexose mutase family. It depends on Mg(2+) as a cofactor. Post-translationally, activated by phosphorylation.

The catalysed reaction is alpha-D-glucosamine 1-phosphate = D-glucosamine 6-phosphate. Functionally, catalyzes the conversion of glucosamine-6-phosphate to glucosamine-1-phosphate. In Pyrococcus furiosus (strain ATCC 43587 / DSM 3638 / JCM 8422 / Vc1), this protein is Probable phosphoglucosamine mutase.